The sequence spans 336 residues: Cycloartenol-C-24-methyltransferase (336 aa).

Methionine 1 is modified (N-acetylmethionine).

Belongs to the class I-like SAM-binding methyltransferase superfamily. Erg6/SMT family. In terms of tissue distribution, highly expressed in vascular tissue, mature leaves and in regions undergoing cellular expansion.

It catalyses the reaction cycloartenol + S-adenosyl-L-methionine = 24-methylenecycloartanol + S-adenosyl-L-homocysteine + H(+). It participates in steroid biosynthesis; sterol biosynthesis. In terms of biological role, catalyzes the methyl transfer from S-adenosyl-methionine to the C-24 of cycloartenol to form 24-methylene cycloartenol. The chain is Cycloartenol-C-24-methyltransferase (SMT1) from Arabidopsis thaliana (Mouse-ear cress).